We begin with the raw amino-acid sequence, 146 residues long: Large ribosomal subunit protein uL15 (146 aa).

Basic and acidic residues predominate over residues 1–13 (MKLHELHSAEGSR). A disordered region spans residues 1–55 (MKLHELHSAEGSRRNRKRVGRGTSSGYGKTSGRGQKGQLARQGGHTRLGFEGGQM). Residues 23 to 35 (TSSGYGKTSGRGQ) are compositionally biased toward gly residues.

It belongs to the universal ribosomal protein uL15 family. In terms of assembly, part of the 50S ribosomal subunit.

Binds to the 23S rRNA. The protein is Large ribosomal subunit protein uL15 of Lactobacillus helveticus (strain DPC 4571).